The primary structure comprises 295 residues: Tyrosine transport system permease protein (295 aa).

8 helical membrane-spanning segments follow: residues 3 to 23 (GIISVMTQSLILSIMALGVYI), 57 to 77 (VVATLMAILCGCTAGLVTGIL), 81 to 101 (FKISNLLSGILVMGMLYSINL), 122 to 142 (ISPIVLALAFVFICKILLDLF), 173 to 193 (ILGLMISNGLIALSGSLMAQF), 200 to 220 (NMGIGTLVLGIASIIIGITLF), 232 to 252 (IIVGSFIYQFTIYFAMSLGML), and 256 to 276 (LKLITAIVIIAFLATGNLNIS).

Belongs to the binding-protein-dependent transport system permease family. As to quaternary structure, the complex is probably composed of two ATP-binding proteins (CDR20291_0806), two transmembrane proteins (CDR20291_0807) and a solute-binding protein (CDR20291_0805).

It is found in the cell membrane. In terms of biological role, probably part of an ABC transporter complex involved in tyrosine uptake. May also import phenylalanine. Probably responsible for the translocation of the substrate across the membrane. In Clostridioides difficile (strain R20291) (Peptoclostridium difficile), this protein is Tyrosine transport system permease protein.